The chain runs to 640 residues: Protein argonaute (640 aa).

An N-terminal domain region spans residues 1 to 100; that stretch reads MYLNLYEIKI…YIKKKFIDNN (100 aa). The linker L1 stretch occupies residues 101–153; that stretch reads FYYKRGNNYISINDKFPLDSNTNVNAHLTYKIKLYKINERYYISVLPKFTFLS. The segment at 154–209 is PAZ domain; the sequence is DKPALESPIKSTYLFNIKSGKTFPYISGLNGVLKIDLGENGIKEVLFPENYYFNFT. A linker L2 region spans residues 210 to 291; that stretch reads SKEAEKFGFS…KYSFYKNDQK (82 aa). Residues 292–423 form a mid domain region; sequence IKIAFFFSSK…YVYKMGNFIP (132 aa). The PIWI domain stretch occupies residues 424 to 640; it reads ECQPYVIRNL…EWKLYIPYMK (217 aa). Catalysis depends on residues aspartate 445, glutamate 481, aspartate 515, and asparagine 623. Position 445 (aspartate 445) interacts with Mn(2+). The Mn(2+) site is built by aspartate 515 and asparagine 623.

This sequence belongs to the argonaute family. Long pAgo subfamily. Mn(2+) serves as cofactor.

In terms of biological role, a highly versatile argonaute that uses 5'-phospho- and 5'-OH- guide RNA (gRNA) or DNA (gDNA) to cleave target RNA or ssDNA (tDNA) in all possible combinations; has no detectable activity in the absence of guide. Uses short guide sequences (18-21 nucleotides (nt) on average) to bind complementary target nucleic acids resulting in target cleavage in a site-specific manner. Using 5'-phospho-gRNA or 5'-OH-gRNA the cleavage site is 10 nt downstream of the target residue base-paired with the 5'-end of the gRNA, using 5'-phospho-gDNA the cleavage site is 11 nucleotides (nt) downstream, while with 5'-OH-gDNA the cleavage site is 9 nt downstream. This Marinitoga hydrogenitolerans (strain DSM 16785 / JCM 12826 / AT1271) protein is Protein argonaute.